The sequence spans 253 residues: Phosphate import ATP-binding protein PstB 3 (253 aa).

An ABC transporter domain is found at 8-248 (LVINNLDLYY…PQDERTENYI (241 aa)). ATP is bound at residue 40 to 47 (GPSGCGKS).

It belongs to the ABC transporter superfamily. Phosphate importer (TC 3.A.1.7) family. As to quaternary structure, the complex is composed of two ATP-binding proteins (PstB), two transmembrane proteins (PstC and PstA) and a solute-binding protein (PstS).

Its subcellular location is the cell membrane. The enzyme catalyses phosphate(out) + ATP + H2O = ADP + 2 phosphate(in) + H(+). In terms of biological role, part of the ABC transporter complex PstSACB involved in phosphate import. Responsible for energy coupling to the transport system. This is Phosphate import ATP-binding protein PstB 3 from Streptococcus agalactiae serotype III (strain NEM316).